Reading from the N-terminus, the 164-residue chain is FMN reductase (NADH) RutF (164 aa).

This sequence belongs to the non-flavoprotein flavin reductase family. RutF subfamily.

The enzyme catalyses FMNH2 + NAD(+) = FMN + NADH + 2 H(+). Catalyzes the reduction of FMN to FMNH2 which is used to reduce pyrimidine by RutA via the Rut pathway. The chain is FMN reductase (NADH) RutF from Escherichia coli O150:H5 (strain SE15).